Reading from the N-terminus, the 537-residue chain is MAAVAVAAAAAALRARILQVSSKVNSSWQPASSFSSSSVPTVKLFIDGKFIESKSDKWIDIHNPATNEVIGRVPESTKAEMDAAVSSCKRTFPAWADTSILSRQQVLLRYQQLIKENLKEIARLIMLEQGKTLADAEGDVFRGLQVVEHACSVTSLMLGDTMPSITKDMDLYSYRLPLGVCAGIAPFNFPAMIPLWMFPMAMVCGNTFLMKPSERVPGATMLLAKLFQDSGAPDGTLNIIHGQHEAVNFICDHPDIKAISFVGSNQAGEYIFERGSRHGKRVQANMGAKNHGVVMPDANKENTLNQLVGAAFGAAGQRCMALSTAILVGEAKKWLPELVERAKKLRVNAGDQPGADLGPLITPQAKERVCNLIDSGTKEGASILLDGRSIKVKGYENGNFVGPTIISNVKPNMTCYKEEIFGPVLVVLETDTLDEAIKIVNDNPYGNGTAIFTTNGATARKYSHLVDVGQVGVNVPIPVPLPMFSFTGSRASFRGDTNFYGKQGIQFYTQLKTITSQWKEEDASLSSPAVVMPTMGR.

Residues 1 to 34 (MAAVAVAAAAAALRARILQVSSKVNSSWQPASSF) constitute a mitochondrion transit peptide. An N6-acetyllysine; alternate mark is found at Lys49, Lys54, Lys57, and Lys78. N6-succinyllysine; alternate is present on residues Lys49, Lys54, Lys57, and Lys78. Lys89 bears the N6-acetyllysine mark. 2 positions are modified to N6-acetyllysine; alternate: Lys119 and Lys131. An N6-succinyllysine; alternate mark is found at Lys119 and Lys131. NAD(+) contacts are provided by Ala185, Phe187, Lys211, Glu214, Arg215, and Ser264. Ser264 carries the post-translational modification Phosphoserine. Residue Lys300 is modified to N6-acetyllysine. The active-site Nucleophile is the Cys319. Lys332 and Lys333 each carry N6-acetyllysine. Residues Lys366 and Lys378 each carry the N6-acetyllysine; alternate modification. Lys366 and Lys378 each carry N6-succinyllysine; alternate. Ser382 is subject to Phosphoserine. Lys393 is modified (N6-succinyllysine). Glu419 contacts NAD(+). Lys502 carries the N6-acetyllysine modification. Lys519 carries the post-translational modification N6-succinyllysine.

It belongs to the aldehyde dehydrogenase family. As to quaternary structure, homodimer. Post-translationally, the N-terminus is blocked.

It is found in the mitochondrion. It carries out the reaction 2-methyl-3-oxopropanoate + NAD(+) + CoA + H2O = propanoyl-CoA + hydrogencarbonate + NADH + H(+). The enzyme catalyses 3-oxopropanoate + NAD(+) + CoA + H2O = hydrogencarbonate + acetyl-CoA + NADH + H(+). It catalyses the reaction (R)-2-methyl-3-oxopropanoate + NAD(+) + CoA + H2O = propanoyl-CoA + hydrogencarbonate + NADH + H(+). The catalysed reaction is (S)-2-methyl-3-oxopropanoate + NAD(+) + CoA + H2O = propanoyl-CoA + hydrogencarbonate + NADH + H(+). Functionally, malonate and methylmalonate semialdehyde dehydrogenase involved in the catabolism of valine, thymine, and compounds catabolized by way of beta-alanine, including uracil and cytidine. The polypeptide is Methylmalonate-semialdehyde/malonate-semialdehyde dehydrogenase [acylating], mitochondrial (ALDH6A1) (Bos taurus (Bovine)).